The primary structure comprises 98 residues: NADH-ubiquinone oxidoreductase chain 4L (98 aa).

3 helical membrane-spanning segments follow: residues 1-21 (MALI…GLLL), 29-49 (SLLC…VMIL), and 61-81 (IVLL…LVMV).

It belongs to the complex I subunit 4L family. In terms of assembly, core subunit of respiratory chain NADH dehydrogenase (Complex I) which is composed of 45 different subunits.

Its subcellular location is the mitochondrion inner membrane. The enzyme catalyses a ubiquinone + NADH + 5 H(+)(in) = a ubiquinol + NAD(+) + 4 H(+)(out). Functionally, core subunit of the mitochondrial membrane respiratory chain NADH dehydrogenase (Complex I) which catalyzes electron transfer from NADH through the respiratory chain, using ubiquinone as an electron acceptor. Part of the enzyme membrane arm which is embedded in the lipid bilayer and involved in proton translocation. This Rhinolophus monoceros (Formosan lesser horseshoe bat) protein is NADH-ubiquinone oxidoreductase chain 4L (MT-ND4L).